An 83-amino-acid chain; its full sequence is Large ribosomal subunit protein eL14 (83 aa).

The protein belongs to the eukaryotic ribosomal protein eL14 family.

This is Large ribosomal subunit protein eL14 from Thermococcus onnurineus (strain NA1).